A 117-amino-acid polypeptide reads, in one-letter code: Large ribosomal subunit protein bL31B (117 aa).

Residues 75–117 (KRFERKKEASPADTPPESDSTTENASVEKKAEKKRVTAKGSKK) form a disordered region. Positions 100–109 (SVEKKAEKKR) are enriched in basic and acidic residues.

The protein belongs to the bacterial ribosomal protein bL31 family. Type B subfamily. In terms of assembly, part of the 50S ribosomal subunit.

This is Large ribosomal subunit protein bL31B from Protochlamydia amoebophila (strain UWE25).